The chain runs to 768 residues: Ral guanine nucleotide dissociation stimulator-like 1 (768 aa).

The N-terminal Ras-GEF domain maps to 65 to 196; sequence KIRTIKAGTL…RAQNLLEQFQ (132 aa). In terms of domain architecture, Ras-GEF spans 232-501; the sequence is SEDLVAEQLT…YALSCEIEAA (270 aa). At Ser520 the chain carries Phosphoserine. Residues 528–623 form a disordered region; it reads MITSPTPTKE…PPSCNNNPKI (96 aa). Composition is skewed to low complexity over residues 541 to 561, 586 to 596, and 605 to 621; these read STASGSSGESMDSVSVSSCES, ESSSSCSSIHS, and SSLINPLSSPPSCNNNP. The Ras-associating domain maps to 648–735; the sequence is DTCIIRISVE…FDFILRKKNS (88 aa).

Interacts with Ras. In terms of tissue distribution, expressed in a wide variety of tissues with strong expression being seen in the heart, brain, kidney, spleen and testis.

Probable guanine nucleotide exchange factor. The protein is Ral guanine nucleotide dissociation stimulator-like 1 (RGL1) of Homo sapiens (Human).